Reading from the N-terminus, the 975-residue chain is FHF complex subunit HOOK-interacting protein 1B (975 aa).

The disordered stretch occupies residues 465-496; the sequence is APSPPRPEHASWARGPGSPSVDSSSVVTVPRP. A Phosphoserine modification is found at Ser467. Over residues 482 to 496 the composition is skewed to low complexity; that stretch reads SPSVDSSSVVTVPRP. Phosphoserine occurs at positions 510, 523, 529, and 533. 3 disordered regions span residues 511–548, 573–621, and 690–717; these read LGGS…GELE, SAPY…GLAV, and SNGG…SFTC. The segment covering 527–538 has biased composition (low complexity); it reads TASPTSSPSRRP. The span at 597-608 shows a compositional bias: basic and acidic residues; it reads LLPEEDRDNVRE. Residue Ser863 is modified to Phosphoserine. Phosphothreonine is present on Thr892. Ser900 bears the Phosphoserine mark.

It belongs to the FHIP family. Component of the FTS/Hook/FHIP complex (FHF complex), composed of AKTIP/FTS, FHIP1B, and one or more members of the Hook family of proteins HOOK1, HOOK2, and HOOK3. The FHF complex associates with the homotypic vesicular sorting complex (the HOPS complex).

Functionally, component of the FTS/Hook/FHIP complex (FHF complex). The FHF complex may function to promote vesicle trafficking and/or fusion via the homotypic vesicular protein sorting complex (the HOPS complex). FHF complex promotes the distribution of AP-4 complex to the perinuclear area of the cell. This chain is FHF complex subunit HOOK-interacting protein 1B, found in Mus musculus (Mouse).